Here is a 445-residue protein sequence, read N- to C-terminus: Histone acetyltransferase ESA1 (445 aa).

At Ser17 the chain carries Phosphoserine. The region spanning 22–74 (IIKCQCWVQKNDEERLAEILSINTRKAPPKFYVHYVNYNKRLDEWITTDRINL) is the Tudor-knot domain. The tract at residues 88-114 (EDNKKQKKKKATNTSETPQDSLQDGVD) is disordered. A compositionally biased stretch (polar residues) spans 99-109 (TNTSETPQDSL). One can recognise an MYST-type HAT domain in the interval 162-433 (ARVRNLNRII…IDPNRLIWKP (272 aa)). The C2HC MYST-type; degenerate zinc finger occupies 195-220 (IYIDDFTLQYFGSKKQYERYRKKCTL). Residues 245 to 266 (RTWCRNLCLLSKLFLDHKTLYY) carry the ESA1-RPD3 motif motif. Lys262 is modified (N6-acetyllysine; by autocatalysis). Acetyl-CoA contacts are provided by residues 303–307 (ACILT) and 312–318 (QRMGYGK). Glu338 acts as the Proton donor/acceptor in catalysis. Ser342 serves as a coordination point for acetyl-CoA.

This sequence belongs to the MYST (SAS/MOZ) family. Component of the NuA4 histone acetyltransferase complex composed of at least ACT1, ARP4, EAF3, EAF5, EAF6, EAF7, EPL1, ESA1, SWC4, TRA1, VID21, YAF9 and YNG2. The complex interacts with histones H4 (HHF1 and HHF2), H3 (HHT1 and HHT2) and H2A (HTA1 and HTA2). Autoacetylation at Lys-262 is required for proper function.

The enzyme catalyses L-lysyl-[histone] + acetyl-CoA = N(6)-acetyl-L-lysyl-[histone] + CoA + H(+). It catalyses the reaction L-lysyl-[protein] + acetyl-CoA = N(6)-acetyl-L-lysyl-[protein] + CoA + H(+). The catalysed reaction is 2-hydroxyisobutanoyl-CoA + L-lysyl-[protein] = N(6)-(2-hydroxyisobutanoyl)-L-lysyl-[protein] + CoA + H(+). It carries out the reaction (2E)-butenoyl-CoA + L-lysyl-[protein] = N(6)-(2E)-butenoyl-L-lysyl-[protein] + CoA + H(+). Its function is as follows. Catalytic component of the NuA4 histone acetyltransferase (HAT), a multiprotein complex involved in epigenetic transcriptional activation of selected genes principally by acetylation of nucleosomal histones H4, H3, H2B, H2A and H2A variant H2A.Z. Acetylates histone H4 to form H4K5ac, H4K8ac, H4K12ac and H4K16ac, histone H3 to form H3K14ac, histone H2B to form H2BK16ac, histone H2A to form H2AK4ac and H2AK7ac, and histone variant H2A.Z to form H2A.ZK14ac. Acetylation of histones gives a specific tag for epigenetic transcription initiation and elongation. Acetylation of histone H4 is essential for DNA double-strand break repair through homologous recombination. Involved in cell cycle progression. Recruitment to promoters depends on H3K4me. Also acetylates non-histone proteins, such as ATG3 and PAH1. Regulates autophagy by acetylating ATG3, controlling interaction the interaction between ATG3 and ATG8 and ATG8 lipidation. Acts as a regulator of fatty-acid-induced triacylglycerol synthesis by catalyzing acetylation of PAH1, thereby promoting the synthesis of diacylglycerol. In addition to protein acetyltransferase, can use different acyl-CoA substrates, such as 2-hydroxyisobutanoyl-CoA (2-hydroxyisobutyryl-CoA) or (2E)-butenoyl-CoA (crotonyl-CoA), and is able to mediate protein 2-hydroxyisobutyrylation and crotonylation, respectively. Catalyzes histone crotonylation. This chain is Histone acetyltransferase ESA1, found in Saccharomyces cerevisiae (strain ATCC 204508 / S288c) (Baker's yeast).